A 134-amino-acid polypeptide reads, in one-letter code: MSSLQAMKTLSLVLLVALLSMERAQGLRCYRCLAVLEGASCSVVSCPFLDGVCVSQKVSVFGSKVRGENKLSLLSCQKDVGFPLLKLTSAVVDSQISCCKGDLCNAVVLAASSPWALCVQLLLSLGSVFLWALL.

Residues 1 to 26 (MSSLQAMKTLSLVLLVALLSMERAQG) form the signal peptide. The region spanning 28 to 76 (RCYRCLAVLEGASCSVVSCPFLDGVCVSQKVSVFGSKVRGENKLSLLSC) is the UPAR/Ly6 domain. 4 disulfides stabilise this stretch: cysteine 29/cysteine 53, cysteine 32/cysteine 41, cysteine 76/cysteine 98, and cysteine 99/cysteine 104. Asparagine 105 is lipidated: GPI-anchor amidated asparagine. The propeptide at 106-134 (AVVLAASSPWALCVQLLLSLGSVFLWALL) is removed in mature form.

The protein resides in the cell membrane. The protein is Lymphocyte antigen 6S of Homo sapiens (Human).